A 60-amino-acid chain; its full sequence is Mating pheromone En-2 (60 aa).

Cystine bridges form between cysteine 11–cysteine 39, cysteine 24–cysteine 35, cysteine 31–cysteine 57, and cysteine 36–cysteine 48.

It is found in the secreted. Functionally, mating ciliate pheromones (or gamones) are diffusible extracellular communication signals that distinguish different intraspecific classes of cells commonly referred to as 'mating types'. They prepare the latter for conjugation by changing their cell surface properties. In Euplotes nobilii (Ciliate), this protein is Mating pheromone En-2.